The chain runs to 615 residues: Probable transporter mch1 (615 aa).

A disordered region spans residues 1–35 (MTGSIGQAPAIDKRDFDINRRSSTPHETAAQEDEA). Positions 11–20 (IDKRDFDINR) are enriched in basic and acidic residues. A helical membrane pass occupies residues 84–104 (FVWGVITCLGAGSITAFSLYG). N-linked (GlcNAc...) asparagine glycosylation occurs at asparagine 112. The next 5 helical transmembrane spans lie at 120 to 140 (EVSI…GYLC), 147 to 167 (PLTL…AFVY), 182 to 202 (FWVM…MYLA), 218 to 238 (GIIL…QSQV), and 261 to 281 (FLFL…ALRI). The N-linked (GlcNAc...) asparagine glycan is linked to asparagine 329. The next 6 helical transmembrane spans lie at 371–391 (IFLA…VTGP), 428–448 (IIAL…DLFA), 477–497 (LAFL…LASP), 512–532 (LVGL…SVVW), 538–558 (GTNW…WGVI), and 583–603 (FGFW…AWLV).

This sequence belongs to the major facilitator superfamily.

The protein resides in the vacuole membrane. Its function is as follows. Probable transporter. In Emericella nidulans (strain FGSC A4 / ATCC 38163 / CBS 112.46 / NRRL 194 / M139) (Aspergillus nidulans), this protein is Probable transporter mch1 (mch1).